We begin with the raw amino-acid sequence, 322 residues long: MIDNIWYKPQLGILSYILSPIAFIFSKIAHNRKIRLQNNQYKSKIPVIIVGNISVGGTGKTPVVRMFANQYLEQGKKPVIISRGYGAKAEKYPFEVDSKTPASVCGDEPAMLFDALGGKVPIVISPHRVDSVKYIEKNYPDADVIISDDGLQHYKLARTKEVVVVDASRMFGNGLCLPAGPLREPVERLKSVDQIIAIGNLDNQNYSELLNYNSNIVRAKIKATKFVNLVTKQSILIDSFYGKSIDAVAGIGNPDKFFSSLDELGVNIYHEHIFRDHHKYTPKDFEHFDPEQIVIMTYKDAIKCKDFAKSNWWYLDIALEFC.

54–61 contacts ATP; it reads SVGGTGKT.

It belongs to the LpxK family.

It catalyses the reaction a lipid A disaccharide + ATP = a lipid IVA + ADP + H(+). Its pathway is glycolipid biosynthesis; lipid IV(A) biosynthesis; lipid IV(A) from (3R)-3-hydroxytetradecanoyl-[acyl-carrier-protein] and UDP-N-acetyl-alpha-D-glucosamine: step 6/6. Functionally, transfers the gamma-phosphate of ATP to the 4'-position of a tetraacyldisaccharide 1-phosphate intermediate (termed DS-1-P) to form tetraacyldisaccharide 1,4'-bis-phosphate (lipid IVA). In Francisella philomiragia subsp. philomiragia (strain ATCC 25017 / CCUG 19701 / FSC 153 / O#319-036), this protein is Tetraacyldisaccharide 4'-kinase.